The chain runs to 352 residues: Threonine synthase (352 aa).

The residue at position 59 (lysine 59) is an N6-(pyridoxal phosphate)lysine. Residues asparagine 85, 185-189, and threonine 314 contribute to the pyridoxal 5'-phosphate site; that span reads GNAGN.

It belongs to the threonine synthase family. Pyridoxal 5'-phosphate is required as a cofactor.

It catalyses the reaction O-phospho-L-homoserine + H2O = L-threonine + phosphate. Its pathway is amino-acid biosynthesis; L-threonine biosynthesis; L-threonine from L-aspartate: step 5/5. Its function is as follows. Catalyzes the gamma-elimination of phosphate from L-phosphohomoserine and the beta-addition of water to produce L-threonine. This chain is Threonine synthase (thrC), found in Bacillus sp. (strain ULM1).